We begin with the raw amino-acid sequence, 351 residues long: MNPTWWRDACQPLDTAAMDQARARQQQLTKPAGSLGQLEALAVHLAGLQGVERPNLDQVAITIFAGDHGVVEEGISAYPQAVTGQMLRNFVGGGAAISVLARQLQASLEVVDLGTIDPHLELPGVRHLRLGSGTANFARQPAMTEVQLRSALQAGRDSVLRAAQSGAQLFIGGEMGIGNTTAAAALASTLLGCPARELSGPGTGLDTAGVRHKAEVIERALVLHGLRADDPLQALGCVGGFEIAALAGAYLACAQQGIAVLVDGFICSVAALVAVRLNPQCRAWLLFAHQGAEPGHKALLDALQAEPLLALGLRLGEGSGAALAVPLLRLACVLHGQMATFAEAAVADRPV.

Glutamate 317 serves as the catalytic Proton acceptor.

The protein belongs to the CobT family.

It carries out the reaction 5,6-dimethylbenzimidazole + nicotinate beta-D-ribonucleotide = alpha-ribazole 5'-phosphate + nicotinate + H(+). Its pathway is nucleoside biosynthesis; alpha-ribazole biosynthesis; alpha-ribazole from 5,6-dimethylbenzimidazole: step 1/2. In terms of biological role, catalyzes the synthesis of alpha-ribazole-5'-phosphate from nicotinate mononucleotide (NAMN) and 5,6-dimethylbenzimidazole (DMB). This is Nicotinate-nucleotide--dimethylbenzimidazole phosphoribosyltransferase from Pseudomonas putida (strain W619).